A 79-amino-acid chain; its full sequence is Cytochrome b (79 aa).

Helical transmembrane passes span 1–7, 31–52, and 67–79; these read TAMFLAM, WLIR…YLHI, and WNVG…LTMM. Residues histidine 37 and histidine 51 each contribute to the heme b site.

Belongs to the cytochrome b family. As to quaternary structure, the cytochrome bc1 complex contains 3 respiratory subunits (MT-CYB, CYC1 and UQCRFS1), 2 core proteins (UQCRC1 and UQCRC2) and probably 6 low-molecular weight proteins. The cofactor is heme b.

It localises to the mitochondrion inner membrane. Its function is as follows. Component of the ubiquinol-cytochrome c reductase complex (complex III or cytochrome b-c1 complex) that is part of the mitochondrial respiratory chain. The b-c1 complex mediates electron transfer from ubiquinol to cytochrome c. Contributes to the generation of a proton gradient across the mitochondrial membrane that is then used for ATP synthesis. The polypeptide is Cytochrome b (mt-cyb) (Hypsophrys nicaraguensis (Moga)).